Reading from the N-terminus, the 523-residue chain is GMP synthase [glutamine-hydrolyzing] (523 aa).

Residues 8-205 (RILILDFGSQ…IRELCECEAL (198 aa)) form the Glutamine amidotransferase type-1 domain. The Nucleophile role is filled by Cys85. Residues His179 and Glu181 contribute to the active site. The region spanning 206 to 398 (WTPSNIISDA…LGLPYDMVYR (193 aa)) is the GMPS ATP-PPase domain. 233 to 239 (SGGVDSS) contributes to the ATP binding site.

Homodimer.

It catalyses the reaction XMP + L-glutamine + ATP + H2O = GMP + L-glutamate + AMP + diphosphate + 2 H(+). The protein operates within purine metabolism; GMP biosynthesis; GMP from XMP (L-Gln route): step 1/1. Catalyzes the synthesis of GMP from XMP. This Alcanivorax borkumensis (strain ATCC 700651 / DSM 11573 / NCIMB 13689 / SK2) protein is GMP synthase [glutamine-hydrolyzing].